The following is a 491-amino-acid chain: Glucose-6-phosphate exchanger SLC37A2 (491 aa).

The helical transmembrane segment at 5–25 threads the bilayer; it reads LAPGIWYRAFILLITFLIYTC. 3 N-linked (GlcNAc...) asparagine glycosylation sites follow: asparagine 43, asparagine 52, and asparagine 58. 5 helical membrane-spanning segments follow: residues 78–98, 108–130, 132–154, 169–189, and 200–220; these read GAVD…SGIF, LTAG…FWNI, VLWY…WPAV, LIMG…SLLA, and SFVV…FFLI. The disordered stretch occupies residues 229–257; that stretch reads SPPQHHGNPEESQDQPEDPANGPSCNKES. The next 6 membrane-spanning stretches (helical) occupy residues 292 to 312, 328 to 348, 352 to 372, 377 to 397, 424 to 444, and 452 to 472; these read LCLL…PLYI, TLFD…SDYI, ATTC…YNHV, IGIS…PYAL, AIID…AGLI, and VFYM…RLVY.

This sequence belongs to the major facilitator superfamily. Organophosphate:Pi antiporter (OPA) (TC 2.A.1.4) family.

Its subcellular location is the endoplasmic reticulum membrane. It carries out the reaction D-glucose 6-phosphate(in) + phosphate(out) = D-glucose 6-phosphate(out) + phosphate(in). Its activity is regulated as follows. Inhibited by vanadate but not by chlorogenic acid. Inorganic phosphate and glucose-6-phosphate antiporter. May transport cytoplasmic glucose-6-phosphate into the lumen of the endoplasmic reticulum and translocate inorganic phosphate into the opposite direction. Independent of a lumenal glucose-6-phosphatase. May not play a role in homeostatic regulation of blood glucose levels. In Bos taurus (Bovine), this protein is Glucose-6-phosphate exchanger SLC37A2.